Consider the following 260-residue polypeptide: uncharacterized protein (260 aa).

The Radical SAM core domain maps to Ala6–Asn239.

This is an uncharacterized protein from Sinorhizobium fredii (strain NBRC 101917 / NGR234).